We begin with the raw amino-acid sequence, 140 residues long: uncharacterized protein (140 aa).

Residue Asn86 is glycosylated (N-linked (GlcNAc...) asparagine; by host). A helical transmembrane segment spans residues 92–112 (IFNGLGFILIVIFIYLLLITL).

Belongs to the asfivirus B117L family.

It localises to the host membrane. The protein localises to the virion. This is an uncharacterized protein from African swine fever virus (isolate Pig/Kenya/KEN-50/1950) (ASFV).